The sequence spans 421 residues: Non-homologous end-joining factor LIF1 (421 aa).

The tract at residues 1–196 is interaction with NEJ1; it reads MSQLTEFISC…VEQLAREREL (196 aa). Residues 365-421 form a disordered region; sequence GIQISAGRSDEDYGDISGSESETDASAGEKKSSNHSEQSGNDREPCLQTESETDIET. A compositionally biased stretch (basic and acidic residues) spans 391–409; the sequence is AGEKKSSNHSEQSGNDREP.

This sequence belongs to the XRCC4-XLF family. XLF subfamily. As to quaternary structure, interacts with DNL4 (via BRCT domain). Interacts (via N-terminus) with NEJ1 (via C-terminus); the interaction is direct. The DNL4-LIF1 complex interacts with POL4.

It is found in the cytoplasm. The protein resides in the nucleus. In terms of biological role, involved in non-homologous repair of DNA double-strand breaks. Stabilizes DNL4. The chain is Non-homologous end-joining factor LIF1 (LIF1) from Saccharomyces cerevisiae (strain ATCC 204508 / S288c) (Baker's yeast).